Consider the following 160-residue polypeptide: Cytochrome b6-f complex subunit 4 (160 aa).

The next 3 helical transmembrane spans lie at 36–56 (LLYVFPVVIMGTIGLVVGLAV), 95–115 (LLGIACQAAIPLGLMLIPFIE), and 131–151 (TFFMIGTLVTLWLGAGAIFPI).

It belongs to the cytochrome b family. PetD subfamily. The 4 large subunits of the cytochrome b6-f complex are cytochrome b6, subunit IV (17 kDa polypeptide, PetD), cytochrome f and the Rieske protein, while the 4 small subunits are PetG, PetL, PetM and PetN. The complex functions as a dimer.

The protein localises to the cellular thylakoid membrane. In terms of biological role, component of the cytochrome b6-f complex, which mediates electron transfer between photosystem II (PSII) and photosystem I (PSI), cyclic electron flow around PSI, and state transitions. This chain is Cytochrome b6-f complex subunit 4, found in Gloeothece citriformis (strain PCC 7424) (Cyanothece sp. (strain PCC 7424)).